Reading from the N-terminus, the 291-residue chain is 33 kDa chaperonin (291 aa).

2 disulfides stabilise this stretch: C235–C237 and C268–C271.

The protein belongs to the HSP33 family. Post-translationally, under oxidizing conditions two disulfide bonds are formed involving the reactive cysteines. Under reducing conditions zinc is bound to the reactive cysteines and the protein is inactive.

Its subcellular location is the cytoplasm. Its function is as follows. Redox regulated molecular chaperone. Protects both thermally unfolding and oxidatively damaged proteins from irreversible aggregation. Plays an important role in the bacterial defense system toward oxidative stress. The sequence is that of 33 kDa chaperonin from Streptococcus agalactiae serotype Ia (strain ATCC 27591 / A909 / CDC SS700).